A 129-amino-acid chain; its full sequence is MGFGKPSSFLAFSILVLCQAGSLQAQPLRSSLESLPDPAALSEKEGRLLLAALVKAYVQRKTNELEQEQEQEMEGSSLTAQKRSCNTATCVTHRLAGLLSRSGGVVKSNFVPTDVGSEAFGRRRRDLQA.

The first 25 residues, 1–25, serve as a signal peptide directing secretion; that stretch reads MGFGKPSSFLAFSILVLCQAGSLQA. Positions 26–81 are excised as a propeptide; sequence QPLRSSLESLPDPAALSEKEGRLLLAALVKAYVQRKTNELEQEQEQEMEGSSLTAQ. Cys-85 and Cys-90 are joined by a disulfide. Phe-120 is modified (phenylalanine amide). Residues 126–129 constitute a propeptide that is removed on maturation; sequence DLQA.

The protein belongs to the calcitonin family.

The protein resides in the secreted. Its function is as follows. CALCB/CGRP2 is a peptide hormone that induces vasodilation mediated by the CALCRL-RAMP1 receptor complex. Dilates a variety of vessels including the coronary, cerebral and systemic vasculature. Its abundance in the CNS also points toward a neurotransmitter or neuromodulator role. The chain is Calcitonin gene-related peptide 2 (CALCB) from Equus caballus (Horse).